The primary structure comprises 72 residues: Translation initiation factor IF-1 (72 aa).

The region spanning 1–72 (MAKSDVIEME…SKGRIVYRAR (72 aa)) is the S1-like domain.

This sequence belongs to the IF-1 family. As to quaternary structure, component of the 30S ribosomal translation pre-initiation complex which assembles on the 30S ribosome in the order IF-2 and IF-3, IF-1 and N-formylmethionyl-tRNA(fMet); mRNA recruitment can occur at any time during PIC assembly.

It localises to the cytoplasm. Its function is as follows. One of the essential components for the initiation of protein synthesis. Stabilizes the binding of IF-2 and IF-3 on the 30S subunit to which N-formylmethionyl-tRNA(fMet) subsequently binds. Helps modulate mRNA selection, yielding the 30S pre-initiation complex (PIC). Upon addition of the 50S ribosomal subunit IF-1, IF-2 and IF-3 are released leaving the mature 70S translation initiation complex. This chain is Translation initiation factor IF-1, found in Marinobacter nauticus (strain ATCC 700491 / DSM 11845 / VT8) (Marinobacter aquaeolei).